A 123-amino-acid polypeptide reads, in one-letter code: Unclassified hydrophobin 9 (123 aa).

A signal peptide spans 1–24 (MFFFNTKPIVFLVVLSVVATFAAA). 4 disulfides stabilise this stretch: cysteine 37–cysteine 103, cysteine 45–cysteine 97, cysteine 46–cysteine 88, and cysteine 104–cysteine 117.

It belongs to the fungal hydrophobin family. As to quaternary structure, self-assembles to form functional amyloid fibrils called rodlets. Self-assembly into fibrillar rodlets occurs spontaneously at hydrophobic:hydrophilic interfaces and the rodlets further associate laterally to form amphipathic monolayers.

The protein resides in the secreted. It is found in the cell wall. In terms of biological role, aerial growth, conidiation, and dispersal of filamentous fungi in the environment rely upon a capability of their secreting small amphipathic proteins called hydrophobins (HPBs) with low sequence identity. Class I can self-assemble into an outermost layer of rodlet bundles on aerial cell surfaces, conferring cellular hydrophobicity that supports fungal growth, development and dispersal; whereas Class II form highly ordered films at water-air interfaces through intermolecular interactions but contribute nothing to the rodlet structure. The protein is Unclassified hydrophobin 9 of Pleurotus ostreatus (strain PC15) (Oyster mushroom).